Consider the following 108-residue polypeptide: Colipase B (108 aa).

An N-terminal signal peptide occupies residues 1–13 (LALLLVALAVAYA). A propeptide spans 14–18 (VPDPR) (enterostatin, activation peptide). 5 cysteine pairs are disulfide-bonded: cysteine 30-cysteine 41, cysteine 36-cysteine 52, cysteine 40-cysteine 74, cysteine 62-cysteine 82, and cysteine 76-cysteine 100. Residue tryptophan 65 coordinates taurodeoxycholate.

It belongs to the colipase family. Forms a 1:1 stoichiometric complex with pancreatic lipase. As to expression, expressed by the pancreas.

Its subcellular location is the secreted. Its function is as follows. Colipase is a cofactor of pancreatic lipase. It allows the lipase to anchor itself to the lipid-water interface. Without colipase the enzyme is washed off by bile salts, which have an inhibitory effect on the lipase. Functionally, enterostatin has a biological activity as a satiety signal. The polypeptide is Colipase B (CLPS2) (Equus caballus (Horse)).